The chain runs to 275 residues: Tumor necrosis factor receptor superfamily member 14 (275 aa).

Positions 1–38 (MEPLPGWGSAPWSQAPTDNTFRLVPCVFLLNLLQRISA) are cleaved as a signal peptide. TNFR-Cys repeat units lie at residues 41 to 75 (SCRQEEFLVGDECCPMCNPGYHVKQVCSEHTGTVC), 77 to 119 (PCPP…DTVC), and 120 to 162 (RCIP…DTVC). Intrachain disulfides connect cysteine 42-cysteine 53, cysteine 54-cysteine 67, cysteine 57-cysteine 75, cysteine 78-cysteine 93, cysteine 96-cysteine 111, cysteine 99-cysteine 119, cysteine 121-cysteine 138, and cysteine 144-cysteine 162. 2 N-linked (GlcNAc...) asparagine glycosylation sites follow: asparagine 184 and asparagine 197. The chain crosses the membrane as a helical span at residues 211-231 (VVSILLPLVIVGAGIAGFLIC).

This sequence belongs to the tumor necrosis factor receptor superfamily. Interacts with TRAF2, TRAF3 and TRAF5. Interacts (via CRD1/TNFR-Cys 1) with CD160; this interaction is direct. Interacts (via CRD1/TNFR-Cys 1) with BTLA; this interaction is direct. In terms of processing, N-glycosylated. In terms of tissue distribution, expressed at mucosal sites including colon and pulmonary epithelial cells. Expressed in naive T cells.

It localises to the cell membrane. Functionally, receptor for four distinct ligands: The TNF superfamily members TNFSF14/LIGHT and homotrimeric LTA/lymphotoxin-alpha and the immunoglobulin superfamily members BTLA and CD160, altogether defining a complex stimulatory and inhibitory signaling network. Signals via the TRAF2-TRAF3 E3 ligase pathway to promote immune cell survival and differentiation. Participates in bidirectional cell-cell contact signaling between antigen presenting cells and lymphocytes. In response to ligation of TNFSF14/LIGHT, delivers costimulatory signals to T cells, promoting cell proliferation and effector functions. Interacts with CD160 on NK cells, enhancing IFNG production and anti-tumor immune response. In the context of bacterial infection, acts as a signaling receptor on epithelial cells for CD160 from intraepithelial lymphocytes, triggering the production of antimicrobial proteins and pro-inflammatory cytokines. Upon binding to CD160 on activated CD4+ T cells, down-regulates CD28 costimulatory signaling, restricting memory and alloantigen-specific immune response. May interact in cis (on the same cell) or in trans (on other cells) with BTLA. In cis interactions, appears to play an immune regulatory role inhibiting in trans interactions in naive T cells to maintain a resting state. In trans interactions, can predominate during adaptive immune response to provide survival signals to effector T cells. This is Tumor necrosis factor receptor superfamily member 14 from Mus musculus (Mouse).